We begin with the raw amino-acid sequence, 238 residues long: Cysteine-rich venom protein pseudechetoxin-like (238 aa).

A signal peptide spans 1 to 19; that stretch reads MIAFIVLLSLAAVLQQSSG. The propeptide occupies 20 to 28; the sequence is TVDFASESS. One can recognise an SCP domain in the interval 38-164; that stretch reads VDKHNDLRRS…STKYLYVCQY (127 aa). Disulfide bonds link Cys75-Cys153, Cys92-Cys165, Cys148-Cys162, Cys184-Cys191, Cys187-Cys196, Cys200-Cys233, Cys209-Cys227, and Cys218-Cys231. The 34-residue stretch at 200 to 233 folds into the ShKT domain; sequence CKHNDDLSNCKPLAKKSKCQTEWIKSKCPATCFC.

It belongs to the CRISP family. Expressed by the venom gland.

The protein resides in the secreted. Functionally, blocks olfactory (CNGA2) and retinal (CNGA1) CNG channel currents. Does not affect neither depolarization- nor caffeine-induced contraction of smooth muscle. The protein is Cysteine-rich venom protein pseudechetoxin-like of Oxyuranus microlepidotus (Inland taipan).